Reading from the N-terminus, the 200-residue chain is ATP synthase subunit s, mitochondrial (200 aa).

The N-terminal 25 residues, 1–25, are a transit peptide targeting the mitochondrion; sequence MMLFGKISQQLCGVKKLPWSCDSRY. Positions 1 to 61 are N-terminal domain; sequence MMLFGKISQQ…SEWLLRCGAM (61 aa). Residue Gly59 coordinates Mg(2+). LRR repeat units follow at residues 62-87, 88-116, 117-141, and 142-173; these read VRYH…KYKI, QAID…KIRL, CKCH…KTIL, and EMEI…LSDL. Thr93 serves as a coordination point for Mg(2+).

Belongs to the ATP synthase subunit s family. As to quaternary structure, homotetramer. Associates with ATP synthase.

The protein resides in the mitochondrion. It is found in the mitochondrion inner membrane. Functionally, involved in regulation of mitochondrial membrane ATP synthase. Necessary for H(+) conduction of ATP synthase. Facilitates energy-driven catalysis of ATP synthesis by blocking a proton leak through an alternative proton exit pathway. This Pongo abelii (Sumatran orangutan) protein is ATP synthase subunit s, mitochondrial (DMAC2L).